The chain runs to 2017 residues: Rootletin (2017 aa).

2 coiled-coil regions span residues 70-262 and 318-444; these read ATEM…KVTN and ERDL…LETE. Residues 464 to 483 are compositionally biased toward polar residues; the sequence is SESGVQLSGSERTADASNGS. The tract at residues 464 to 518 is disordered; that stretch reads SESGVQLSGSERTADASNGSLRGLSGQRTPSPPRRSSPGRGRSPRRGPSPACSDS. A compositionally biased stretch (low complexity) spans 499 to 513; it reads SSPGRGRSPRRGPSP. Coiled-coil stretches lie at residues 546–1058 and 1091–1438; these read QDLL…LAES and EMER…GLRS. Disordered stretches follow at residues 1184–1226 and 1443–1575; these read LRES…RSAV and GLGL…GRLS. A phosphoserine mark is found at S1460, S1470, S1476, S1483, S1486, S1490, and S1496. A coiled-coil region spans residues 1505-1704; that stretch reads EAVRGALREF…DSEVKAGTLQ (200 aa). The span at 1510 to 1529 shows a compositional bias: basic and acidic residues; it reads ALREFLQELRSAQRERDELR. S1575 and S1660 each carry phosphoserine. The disordered stretch occupies residues 1962 to 2017; sequence RSAQAQTERTLEARERAHRQRVRGLEEQVSTLKGQLQQELRRSSAPFSPPSGPPEK. The segment covering 1989–1999 has biased composition (polar residues); sequence QVSTLKGQLQQ. A compositionally biased stretch (pro residues) spans 2008-2017; that stretch reads FSPPSGPPEK.

This sequence belongs to the rootletin family. In terms of assembly, homomer. Interacts with KLC3, NEK2 and the N-terminus of CEP250. Interacts with CEP44. Interacts with CCDC102B (via N-terminus). In terms of processing, phosphorylated by NEK2 which may regulate its association with centrosomes.

The protein localises to the cytoplasm. Its subcellular location is the cytoskeleton. It localises to the microtubule organizing center. It is found in the centrosome. The protein resides in the centriole. The protein localises to the cilium basal body. Functionally, major structural component of the ciliary rootlet, a cytoskeletal-like structure in ciliated cells which originates from the basal body at the proximal end of a cilium and extends proximally toward the cell nucleus. Furthermore, is required for the correct positioning of the cilium basal body relative to the cell nucleus, to allow for ciliogenesis. Contributes to centrosome cohesion before mitosis. This chain is Rootletin, found in Homo sapiens (Human).